A 497-amino-acid chain; its full sequence is uncharacterized protein (497 aa).

Residues Asp12, Thr13, and Cys52 each coordinate Ca(2+). Cys52 functions as the Nucleophile in the catalytic mechanism. Residue Cys52 is modified to 3-oxoalanine (Cys). His102 is a catalytic residue. The Ca(2+) site is built by Asp284 and His285.

The protein belongs to the sulfatase family. Ca(2+) serves as cofactor. The conversion to 3-oxoalanine (also known as C-formylglycine, FGly), of a serine or cysteine residue in prokaryotes and of a cysteine residue in eukaryotes, is critical for catalytic activity.

This is an uncharacterized protein from Escherichia coli (strain K12).